The primary structure comprises 542 residues: Cytochrome P450 monooxygenase sdnH (542 aa).

Residues 25–45 (LYVAGGILGAFTVYSIILVVY) traverse the membrane as a helical segment. The disordered stretch occupies residues 141 to 160 (IIPPRGLGQEDSIGSTRSHD). A helical membrane pass occupies residues 340–360 (FMGAGTYPTAATLIFVAYYIL). Cys-483 contacts heme. A glycan (N-linked (GlcNAc...) asparagine) is linked at Asn-506.

Belongs to the cytochrome P450 family. The cofactor is heme.

The protein localises to the membrane. Its pathway is antibiotic biosynthesis. Its function is as follows. Cytochrome P450 monooxygenase; part of the gene cluster that mediates the biosynthesis of sordarin and hypoxysordarin, glycoside antibiotics with a unique tetracyclic diterpene aglycone structure. First, the geranylgeranyl diphosphate synthase sdnC constructs GGDP from farnesyl diphosphate and isopentenyl diphosphate. The diterpene cyclase sdnA then catalyzes the cyclization of GGDP to afford cycloaraneosene. Cycloaraneosene is then hydroxylated four times by the putative cytochrome P450 monooxygenases sdnB, sdnE, sdnF and sdnH to give a hydroxylated cycloaraneosene derivative such as cycloaraneosene-8,9,13,19-tetraol. Although the order of the hydroxylations is unclear, at least C8, C9 and C13 of the cycloaraneosene skeleton are hydroxylated before the sordaricin formation. Dehydration of the 13-hydroxy group of the hydroxylated cycloaraneosene derivative might be catalyzed by an unassigned hypothetical protein such as sdnG and sdnP to construct the cyclopentadiene moiety. The FAD-dependent oxidoreductase sdnN is proposed to catalyze the oxidation at C9 of the hydroxylated cycloaraneosene derivative and also catalyze the Baeyer-Villiger oxidation to give the lactone intermediate. The presumed lactone intermediate would be hydrolyzed to give an acrolein moiety and a carboxylate moiety. Then, [4+2]cycloaddition would occur between the acrolein moiety and the cyclopentadiene moiety to give sordaricin. SdnN might also be involved in the [4+2]cycloaddition after the hypothesized oxidation to accommodate the oxidized product and prompt the [4+2]cycloaddition. GDP-6-deoxy-D-altrose may be biosynthesized from GDP-D-mannose by the putative GDP-mannose-4,6-dehydratase sdnI and the short-chain dehydrogenase sdnK. The glycosyltransferase sdnJ catalyzes the attachment of 6-deoxy-D-altrose onto the 19-hydroxy group of sordaricin to give 4'-O-demethylsordarin. The methyltransferase sdnD would complete the biosynthesis of sordarin. Sordarin can be further modified into hypoxysordarin. The unique acyl chain at the 3'-hydroxy group of hypoxysordarin would be constructed by an iterative type I PKS sdnO and the trans-acting polyketide methyltransferase sdnL. SdnL would be responsible for the introduction of an alpha-methyl group of the polyketide chain. Alternatively, the beta-lactamase-like protein sdnR might be responsible for the cleavage and transfer of the polyketide chain from the PKS sdnO to sordarin. Two putative cytochrome P450 monooxygenases, sdnQ and sdnT, might catalyze the epoxidations of the polyketide chain to complete the biosynthesis of hypoxysordarin. Transcriptional regulators sdnM and sdnS are presumably encoded for the transcriptional regulation of the expression of the sdn gene cluster. The polypeptide is Cytochrome P450 monooxygenase sdnH (Sordaria araneosa (Pleurage araneosa)).